The sequence spans 51 residues: Ribosome biogenesis protein Nop10 (51 aa).

The protein belongs to the NOP10 family.

In terms of biological role, involved in ribosome biogenesis; more specifically in 18S rRNA pseudouridylation and in cleavage of pre-rRNA. The protein is Ribosome biogenesis protein Nop10 of Methanococcus maripaludis (strain C7 / ATCC BAA-1331).